Here is a 159-residue protein sequence, read N- to C-terminus: CASP-like protein 5C1 (159 aa).

Residues 1 to 6 (MDNGDR) lie on the Cytoplasmic side of the membrane. A helical membrane pass occupies residues 7 to 29 (SGAGAGAVGSAGSLGLRVGQAVF). At 30 to 48 (SSASLLFMSVGVEFFSYTA) the chain is on the extracellular side. Residues 49–69 (FCFLVTIMGLVIPWSCTLAMI) form a helical membrane-spanning segment. Residues 70–94 (DVYSVFVGCPLRVPGVMVIVVVGDC) are Cytoplasmic-facing. The helical transmembrane segment at 95–117 (ALSIVSFAAACSSAAVIDLLLQL) threads the bilayer. Topologically, residues 118 to 134 (HGSHSSPTFCGRYQLSA) are extracellular. A helical transmembrane segment spans residues 135 to 155 (MMAFLSWLLMAASATFNLWFV). The Cytoplasmic segment spans residues 156–159 (ASRW).

The protein belongs to the Casparian strip membrane proteins (CASP) family. In terms of assembly, homodimer and heterodimers.

Its subcellular location is the cell membrane. In Zea mays (Maize), this protein is CASP-like protein 5C1.